A 554-amino-acid polypeptide reads, in one-letter code: uncharacterized protein (554 aa).

The next 5 helical transmembrane spans lie at serine 13–leucine 31, isoleucine 36–phenylalanine 58, leucine 73–phenylalanine 92, leucine 99–tryptophan 121, and isoleucine 161–isoleucine 183. RCK C-terminal domains are found at residues lysine 199 to lysine 281 and glutamate 282 to asparagine 366. 4 consecutive transmembrane segments (helical) span residues isoleucine 376–alanine 395, leucine 405–glycine 422, isoleucine 442–valine 464, and glycine 468–alanine 490.

Belongs to the AAE transporter (TC 2.A.81) family.

Its subcellular location is the cell membrane. This is an uncharacterized protein from Bacteroides thetaiotaomicron (strain ATCC 29148 / DSM 2079 / JCM 5827 / CCUG 10774 / NCTC 10582 / VPI-5482 / E50).